Consider the following 528-residue polypeptide: Protein spinster homolog 1 (528 aa).

The disordered stretch occupies residues 1–38 (MAGSDTAPFLSQADDPDDGPAPGHPGLPGPMGNPKSGE). At alanine 2 the chain carries N-acetylalanine. Helical transmembrane passes span 60–80 (LIVV…FTVA), 98–118 (GLIQ…FGYL), 126–146 (YLMC…SFIP), 160–180 (VGVG…DLFV), 187–207 (MLSI…IAGS), 218–238 (WALR…FLVV), 278–298 (LGFT…PAFL), 323–343 (LIFG…GVEI), 357–377 (LVCA…LACA), 381–401 (IVAT…NWAI), 421–441 (FQIV…IGLI), and 465–485 (MLCA…AMFI). Residue serine 518 is modified to Phosphoserine.

Belongs to the major facilitator superfamily. Spinster (TC 2.A.1.49) family. In terms of assembly, interacts with BCL2 and BCL2L1. As to expression, expressed in liver (at mRNA and protein levels).

The protein localises to the lysosome membrane. The enzyme catalyses a 1-acyl-sn-glycero-3-phosphocholine(out) + H(+)(out) = a 1-acyl-sn-glycero-3-phosphocholine(in) + H(+)(in). It catalyses the reaction 1-hexadecanoyl-sn-glycero-3-phosphocholine(out) + H(+)(out) = 1-hexadecanoyl-sn-glycero-3-phosphocholine(in) + H(+)(in). It carries out the reaction 1-(9Z-octadecenoyl)-sn-glycero-3-phosphocholine(out) + H(+)(out) = 1-(9Z-octadecenoyl)-sn-glycero-3-phosphocholine(in) + H(+)(in). The catalysed reaction is 1-(5Z,8Z,11Z,14Z-eicosatetraenoyl)-sn-glycero-3-phosphocholine(out) + H(+)(out) = 1-(5Z,8Z,11Z,14Z-eicosatetraenoyl)-sn-glycero-3-phosphocholine(in) + H(+)(in). The enzyme catalyses 1-(4Z,7Z,10Z,13Z,16Z,19Z-docosahexaenoyl)-sn-glycero-3-phosphocholine(out) + H(+)(out) = 1-(4Z,7Z,10Z,13Z,16Z,19Z-docosahexaenoyl)-sn-glycero-3-phosphocholine(in) + H(+)(in). It catalyses the reaction a 1-acyl-sn-glycero-3-phosphoethanolamine(out) + H(+)(out) = a 1-acyl-sn-glycero-3-phosphoethanolamine(in) + H(+)(in). It carries out the reaction 1-(9Z-octadecenoyl)-sn-glycero-3-phosphoethanolamine(out) + H(+)(out) = 1-(9Z-octadecenoyl)-sn-glycero-3-phosphoethanolamine(in) + H(+)(in). The catalysed reaction is 1-acyl-sn-glycero-3-phospho-(1'-sn-glycerol)(out) + H(+)(out) = 1-acyl-sn-glycero-3-phospho-(1'-sn-glycerol)(in) + H(+)(in). The enzyme catalyses 1-(9Z-octadecenoyl)-sn-glycero-3-phospho-(1'-sn-glycerol)(out) + H(+)(out) = 1-(9Z-octadecenoyl)-sn-glycero-3-phospho-(1'-sn-glycerol)(in) + H(+)(in). It catalyses the reaction a 1-O-(1Z-alkenyl)-sn-glycero-3-phosphocholine(out) + H(+)(out) = a 1-O-(1Z-alkenyl)-sn-glycero-3-phosphocholine(in) + H(+)(in). It carries out the reaction 1-(1Z-hexadecenyl)-sn-glycero-3-phosphocholine(out) + H(+)(out) = 1-(1Z-hexadecenyl)-sn-glycero-3-phosphocholine(in) + H(+)(in). The catalysed reaction is a 1-O-(1Z-alkenyl)-sn-glycero-3-phosphoethanolamine(out) + H(+)(out) = a 1-O-(1Z-alkenyl)-sn-glycero-3-phosphoethanolamine(in) + H(+)(in). The enzyme catalyses 1-O-(1Z-hexadecenyl)-sn-glycero-3-phosphoethanolamine(out) + H(+)(out) = 1-O-(1Z-hexadecenyl)-sn-glycero-3-phosphoethanolamine(in) + H(+)(in). Functionally, plays a critical role in the phospholipid salvage pathway from lysosomes to the cytosol. Mediates the rate-limiting, proton-dependent, lysosomal efflux of lysophospholipids, which can then be reacylated by acyltransferases in the endoplasmic reticulum to form phospholipids. Selective for zwitterionic headgroups such as lysophosphatidylcholine (LPC) and lysophosphatidylethanolamine (LPE), can also transport lysophosphatidylglycerol (LPG), but not other anionic lysophospholipids, sphingosine, nor sphingomyelin. Transports lysophospholipids with saturated, monounsaturated, and polyunsaturated fatty acids, such as 1-hexadecanoyl-sn-glycero-3-phosphocholine, 1-(9Z-octadecenoyl)-sn-glycero-3-phosphocholine and 1-(4Z,7Z,10Z,13Z,16Z,19Z-docosahexaenoyl)-sn-glycero-3-phosphocholine, respectively. Can also transport lysoplasmalogen (LPC with a fatty alcohol) such as 1-(1Z-hexadecenyl)-sn-glycero-3-phosphocholine. Essential player in lysosomal homeostasis. Crucial for cell survival under conditions of nutrient limitation. May be involved in necrotic or autophagic cell death. The sequence is that of Protein spinster homolog 1 (Spns1) from Mus musculus (Mouse).